A 158-amino-acid polypeptide reads, in one-letter code: Small ribosomal subunit protein uS9 (158 aa).

It belongs to the universal ribosomal protein uS9 family.

The chain is Small ribosomal subunit protein uS9 from Brucella canis (strain ATCC 23365 / NCTC 10854 / RM-666).